Consider the following 473-residue polypeptide: Ribulose bisphosphate carboxylase large chain (473 aa).

Residues 1-136 (MAVKKYSAGV…RLEDVRFPLA (136 aa)) form a necessary and sufficient to target proteins to carboxysomes, interacts with shell proteins region. Residues Asn-116 and Thr-166 each coordinate substrate. Lys-168 functions as the Proton acceptor in the catalytic mechanism. Residue Lys-170 participates in substrate binding. Mg(2+) is bound by residues Lys-194, Asp-196, and Glu-197. Lys-194 bears the N6-carboxylysine mark. The active-site Proton acceptor is the His-287. Residues Arg-288, His-320, and Ser-372 each coordinate substrate.

This sequence belongs to the RuBisCO large chain family. Type I subfamily. As to quaternary structure, heterohexadecamer of 8 large chains and 8 small chains. Forms a CsoS2-CsoS1-RuBisCO complex. The N-terminus (residues 1-136) interacts with shell proteins CsoS1A, CsoS1B and CsoS1C. Holo-RuBisCO interacts with the N-terminal repeats of CsoS2; binding is sensitive to ionic strength. A fusion of a single N-terminal repeat to the C-terminus of the large subunit of RuBisCO (cbbL) shows the repeat can lie between a CbbL dimer, making minor contacts to CbbS; thus each RuBisCO holoenzyme could bind 8 repeats. The cofactor is Mg(2+).

It is found in the carboxysome. It carries out the reaction 2 (2R)-3-phosphoglycerate + 2 H(+) = D-ribulose 1,5-bisphosphate + CO2 + H2O. It catalyses the reaction D-ribulose 1,5-bisphosphate + O2 = 2-phosphoglycolate + (2R)-3-phosphoglycerate + 2 H(+). RuBisCO catalyzes two reactions: the carboxylation of D-ribulose 1,5-bisphosphate, the primary event in carbon dioxide fixation, as well as the oxidative fragmentation of the pentose substrate. Both reactions occur simultaneously and in competition at the same active site. There are estimated to be 270 RuBisCO heterohexadecamers per carboxysome. Its function is as follows. Alpha-carboxysomes are able to assemble in the absence of RuBisCO, unlike beta-carboxysomes. The RuBisCO large subunit is required for enzyme integration into carboxysomes; replacing it with the carboxysomally targeted gene (Tcr_0838, AC Q31HD9) of H.crungenus places RuBisCO in the carboxysome, while the non-carboxysomal large subunit of H.crungenus (Tcr_0427, AC Q31IK0) is not incorporated in the carboxysome. The chain is Ribulose bisphosphate carboxylase large chain from Halothiobacillus neapolitanus (strain ATCC 23641 / c2) (Thiobacillus neapolitanus).